The primary structure comprises 127 residues: Fluoride-specific ion channel FluC (127 aa).

4 helical membrane passes run 1-21 (MPQG…GACL), 39-59 (FGTL…YGVI), 72-92 (LIGV…VETL), and 105-125 (ANVF…IELM). 2 residues coordinate Na(+): G79 and T82.

This sequence belongs to the fluoride channel Fluc/FEX (TC 1.A.43) family.

Its subcellular location is the cell inner membrane. It carries out the reaction fluoride(in) = fluoride(out). Na(+) is not transported, but it plays an essential structural role and its presence is essential for fluoride channel function. In terms of biological role, fluoride-specific ion channel. Important for reducing fluoride concentration in the cell, thus reducing its toxicity. The polypeptide is Fluoride-specific ion channel FluC (Alteromonas mediterranea (strain DSM 17117 / CIP 110805 / LMG 28347 / Deep ecotype)).